The chain runs to 264 residues: Thymidylate synthase (264 aa).

Arg-21 is a binding site for dUMP. His-51 is a (6R)-5,10-methylene-5,6,7,8-tetrahydrofolate binding site. Residue 126-127 (RR) coordinates dUMP. Cys-146 (nucleophile) is an active-site residue. Residues 166 to 169 (RSAD), Asn-177, and 207 to 209 (HIY) each bind dUMP. Asp-169 contributes to the (6R)-5,10-methylene-5,6,7,8-tetrahydrofolate binding site. Ala-263 lines the (6R)-5,10-methylene-5,6,7,8-tetrahydrofolate pocket.

It belongs to the thymidylate synthase family. Bacterial-type ThyA subfamily. In terms of assembly, homodimer.

The protein localises to the cytoplasm. It catalyses the reaction dUMP + (6R)-5,10-methylene-5,6,7,8-tetrahydrofolate = 7,8-dihydrofolate + dTMP. It participates in pyrimidine metabolism; dTTP biosynthesis. In terms of biological role, catalyzes the reductive methylation of 2'-deoxyuridine-5'-monophosphate (dUMP) to 2'-deoxythymidine-5'-monophosphate (dTMP) while utilizing 5,10-methylenetetrahydrofolate (mTHF) as the methyl donor and reductant in the reaction, yielding dihydrofolate (DHF) as a by-product. This enzymatic reaction provides an intracellular de novo source of dTMP, an essential precursor for DNA biosynthesis. This Bacteroides fragilis (strain ATCC 25285 / DSM 2151 / CCUG 4856 / JCM 11019 / LMG 10263 / NCTC 9343 / Onslow / VPI 2553 / EN-2) protein is Thymidylate synthase.